The sequence spans 1983 residues: Nonribosomal peptide synthetase verP (1983 aa).

The segment at 11-405 (FAQAASRCPD…FRGRKDRTVK (395 aa)) is adenylation 1. Positions 526–602 (DRHLDTLLTV…DVAPLITSRA (77 aa)) constitute a Carrier 1 domain. Ser563 bears the O-(pantetheine 4'-phosphoryl)serine mark. The condensation 1 stretch occupies residues 769–1047 (ETDELTVVLT…GQHFKHALYS (279 aa)). Residues 1089–1469 (QVMGQFPSLI…GRIDRLVKLR (381 aa)) are adenylation 2. The region spanning 1584 to 1662 (ITRPKIEDKL…DQINMVRALL (79 aa)) is the Carrier 2 domain. The residue at position 1622 (Ser1622) is an O-(pantetheine 4'-phosphoryl)serine. A condensation 2 region spans residues 1652 to 1976 (KDQINMVRAL…GGLEHPLFEC (325 aa)).

The protein belongs to the NRP synthetase family.

Its pathway is mycotoxin biosynthesis. Its function is as follows. Nonribosomal peptide synthetase; part of the gene cluster that mediates the biosynthesis of 11'-deoxyverticillin A, one of the dimeric epipolythiodioxopiperazines (ETPs) from the verticillin family that act as mycotoxins. 11'-deoxyverticillin A is required for normal conidiation. The nonribosomal peptide synthetase verP is speculated to be responsible for condensation of amino acids to form the carbon skeleton of verticillin, whereas the cluster-specific tailoring enzymes are involved in further modifications leading to the production of 11'-deoxyverticillin A. The protein is Nonribosomal peptide synthetase verP of Clonostachys rogersoniana.